The sequence spans 94 residues: Progonadoliberin-1 (94 aa).

A signal peptide spans 1 to 22; the sequence is MAAKILALWLLLAGTVFPQGCC. Q23 bears the Pyrrolidone carboxylic acid mark. At G32 the chain carries Glycine amide.

This sequence belongs to the GnRH family. Synthesized in preoptic neurons and is transported to the pituitary in the preoptic-hypophyseal axons.

The protein localises to the secreted. In terms of biological role, stimulates the secretion of gonadotropins. May be responsible for the regulation of the hypothalamic-pituitary-gonadal axis. In Haplochromis burtoni (Burton's mouthbrooder), this protein is Progonadoliberin-1 (gnrh1).